Here is a 492-residue protein sequence, read N- to C-terminus: Adenosylhomocysteinase (492 aa).

Substrate contacts are provided by threonine 68, aspartate 153, and glutamate 215. NAD(+) is bound at residue 216–218 (TTT). Positions 245 and 249 each coordinate substrate. Residues asparagine 250, 279-284 (GYGDVG), glutamate 302, asparagine 337, 358-360 (IGH), and asparagine 406 each bind NAD(+).

This sequence belongs to the adenosylhomocysteinase family. The cofactor is NAD(+).

The protein resides in the cytoplasm. It catalyses the reaction S-adenosyl-L-homocysteine + H2O = L-homocysteine + adenosine. Its pathway is amino-acid biosynthesis; L-homocysteine biosynthesis; L-homocysteine from S-adenosyl-L-homocysteine: step 1/1. Functionally, may play a key role in the regulation of the intracellular concentration of adenosylhomocysteine. This is Adenosylhomocysteinase from Mycobacterium ulcerans (strain Agy99).